Consider the following 279-residue polypeptide: Alcohol dehydrogenase-related 31 kDa protein (279 aa).

Position 11–34 (11–34) interacts with NAD(+); sequence YVADCGGIALETSKVLMTKNIAKL. S139 is a binding site for substrate. The Proton acceptor role is filled by Y152.

This sequence belongs to the short-chain dehydrogenases/reductases (SDR) family.

In Drosophila subobscura (Fruit fly), this protein is Alcohol dehydrogenase-related 31 kDa protein (Adhr).